We begin with the raw amino-acid sequence, 258 residues long: tRNA pseudouridine synthase A (258 aa).

Asp52 serves as the catalytic Nucleophile. Position 110 (Tyr110) interacts with substrate.

It belongs to the tRNA pseudouridine synthase TruA family. Homodimer.

It carries out the reaction uridine(38/39/40) in tRNA = pseudouridine(38/39/40) in tRNA. Functionally, formation of pseudouridine at positions 38, 39 and 40 in the anticodon stem and loop of transfer RNAs. The sequence is that of tRNA pseudouridine synthase A from Francisella tularensis subsp. tularensis (strain FSC 198).